Reading from the N-terminus, the 490-residue chain is Probable cytosol aminopeptidase (490 aa).

Positions 262 and 267 each coordinate Mn(2+). Lysine 274 is an active-site residue. The Mn(2+) site is built by aspartate 285, aspartate 344, and glutamate 346. Arginine 348 is a catalytic residue.

Belongs to the peptidase M17 family. Mn(2+) is required as a cofactor.

The protein resides in the cytoplasm. It carries out the reaction Release of an N-terminal amino acid, Xaa-|-Yaa-, in which Xaa is preferably Leu, but may be other amino acids including Pro although not Arg or Lys, and Yaa may be Pro. Amino acid amides and methyl esters are also readily hydrolyzed, but rates on arylamides are exceedingly low.. It catalyses the reaction Release of an N-terminal amino acid, preferentially leucine, but not glutamic or aspartic acids.. Presumably involved in the processing and regular turnover of intracellular proteins. Catalyzes the removal of unsubstituted N-terminal amino acids from various peptides. The chain is Probable cytosol aminopeptidase from Mannheimia succiniciproducens (strain KCTC 0769BP / MBEL55E).